The primary structure comprises 394 residues: Elongation factor Tu (394 aa).

The tr-type G domain occupies 10 to 204 (KPHVNVGTIG…ALDTYIPEPE (195 aa)). The G1 stretch occupies residues 19 to 26 (GHVDHGKT). 19–26 (GHVDHGKT) is a binding site for GTP. Thr-26 provides a ligand contact to Mg(2+). The tract at residues 60 to 64 (GITIN) is G2. A G3 region spans residues 81–84 (DCPG). GTP-binding positions include 81–85 (DCPGH) and 136–139 (NKCD). Positions 136–139 (NKCD) are G4. The G5 stretch occupies residues 174-176 (SAL).

The protein belongs to the TRAFAC class translation factor GTPase superfamily. Classic translation factor GTPase family. EF-Tu/EF-1A subfamily. In terms of assembly, monomer.

The protein localises to the cytoplasm. It catalyses the reaction GTP + H2O = GDP + phosphate + H(+). Functionally, GTP hydrolase that promotes the GTP-dependent binding of aminoacyl-tRNA to the A-site of ribosomes during protein biosynthesis. The chain is Elongation factor Tu from Shewanella denitrificans (strain OS217 / ATCC BAA-1090 / DSM 15013).